The sequence spans 284 residues: Bifunctional protein FolD (284 aa).

NADP(+) contacts are provided by residues 166 to 168 and Ile-232; that span reads GAS.

This sequence belongs to the tetrahydrofolate dehydrogenase/cyclohydrolase family. In terms of assembly, homodimer.

The enzyme catalyses (6R)-5,10-methylene-5,6,7,8-tetrahydrofolate + NADP(+) = (6R)-5,10-methenyltetrahydrofolate + NADPH. It carries out the reaction (6R)-5,10-methenyltetrahydrofolate + H2O = (6R)-10-formyltetrahydrofolate + H(+). It functions in the pathway one-carbon metabolism; tetrahydrofolate interconversion. Catalyzes the oxidation of 5,10-methylenetetrahydrofolate to 5,10-methenyltetrahydrofolate and then the hydrolysis of 5,10-methenyltetrahydrofolate to 10-formyltetrahydrofolate. The polypeptide is Bifunctional protein FolD (Glaesserella parasuis serovar 5 (strain SH0165) (Haemophilus parasuis)).